The following is a 622-amino-acid chain: Probable ATP-dependent RNA helicase DDX41 (622 aa).

The segment covering 1 to 15 (MEESEPERKRARTDE) has biased composition (basic and acidic residues). Disordered regions lie at residues 1 to 39 (MEES…YVPL) and 52 to 84 (QRRR…PQSN). Residue serine 4 is modified to Phosphoserine. An N6-acetyllysine modification is found at lysine 9. Lysine 9 is covalently cross-linked (Glycyl lysine isopeptide (Lys-Gly) (interchain with G-Cter in ubiquitin)). Serine 21 and serine 23 each carry phosphoserine. Phosphotyrosine is present on tyrosine 33. Lysine 115 participates in a covalent cross-link: Glycyl lysine isopeptide (Lys-Gly) (interchain with G-Cter in ubiquitin). The Q motif signature appears at 181-209 (KSFKEMKFPAAILRGLKKKGIHHPTPIQI). Residues 212–396 (IPTILSGRDM…KSALVKPVTI (185 aa)) enclose the Helicase ATP-binding domain. 225-232 (AFTGSGKT) serves as a coordination point for ATP. The short motif at 344 to 347 (DEAD) is the DEAD box element. A Helicase C-terminal domain is found at 407 to 567 (DVIQEVEYVK…KVPPVLQVLH (161 aa)). Phosphotyrosine; by BTK is present on tyrosine 414. Residues lysine 416 and lysine 442 each participate in a glycyl lysine isopeptide (Lys-Gly) (interchain with G-Cter in SUMO2) cross-link. Residues 580-597 (RGCAFCGGLGHRITDCPK) form a CCHC-type zinc finger.

This sequence belongs to the DEAD box helicase family. DDX41 subfamily. As to quaternary structure, identified in the spliceosome C complex. Interacts with ERCC6. Interacts with FAM50A. Interacts with STING1. Interacts with CGAS. Interacts with several spliceosomes components such as PRP19 or CDC5L. In terms of processing, acetylation at Lys-9 regulates the nuclear/cytoplasmic localization. Phosphorylated by BTK; phosphorylation induces binding to dsDNA and STING1. Post-translationally, 'Lys-48'-linked ubiquitinated and degraded by TRIM21 leading to negative regulation of the innate immune response to intracellular dsDNA.

It localises to the nucleus. The protein resides in the cytoplasm. The catalysed reaction is ATP + H2O = ADP + phosphate + H(+). Multifunctional protein that participates in many aspects of cellular RNA metabolism. Plays pivotal roles in innate immune sensing and hematopoietic homeostasis. Recognizes foreign or self-nucleic acids generated during microbial infection, thereby initiating anti-pathogen responses. Mechanistically, phosphorylation by BTK allows binding to dsDNA leading to interaction with STING1. Modulates the homeostasis of dsDNA through its ATP-dependent DNA-unwinding activity and ATP-independent strand-annealing activity. In turn, induces STING1-mediated type I interferon and cytokine responses to DNA and DNA viruses. Selectively modulates the transcription of certain immunity-associated genes by regulating their alternative splicing. Binds to RNA (R)-loops, structures consisting of DNA/RNA hybrids and a displaced strand of DNA that occur during transcription, and prevents their accumulation, thereby maintaining genome stability. Also participates in pre-mRNA splicing, translational regulation and snoRNA processing, which is essential for ribosome biogenesis. The sequence is that of Probable ATP-dependent RNA helicase DDX41 (DDX41) from Homo sapiens (Human).